A 253-amino-acid chain; its full sequence is Adenosylcobinamide-GDP ribazoletransferase (253 aa).

Helical transmembrane passes span 33–53, 56–76, 106–126, 132–152, 178–198, 209–229, and 233–253; these read ISPL…YVLL, ILEA…RGFN, IGSG…VALL, FYTI…GLYI, VLLF…FLVF, LGGS…PLFL, and EITN…LYLH.

It belongs to the CobS family. The cofactor is Mg(2+).

It localises to the cell membrane. It carries out the reaction alpha-ribazole + adenosylcob(III)inamide-GDP = adenosylcob(III)alamin + GMP + H(+). The catalysed reaction is alpha-ribazole 5'-phosphate + adenosylcob(III)inamide-GDP = adenosylcob(III)alamin 5'-phosphate + GMP + H(+). It functions in the pathway cofactor biosynthesis; adenosylcobalamin biosynthesis; adenosylcobalamin from cob(II)yrinate a,c-diamide: step 7/7. In terms of biological role, joins adenosylcobinamide-GDP and alpha-ribazole to generate adenosylcobalamin (Ado-cobalamin). Also synthesizes adenosylcobalamin 5'-phosphate from adenosylcobinamide-GDP and alpha-ribazole 5'-phosphate. This Saccharolobus islandicus (strain M.16.27) (Sulfolobus islandicus) protein is Adenosylcobinamide-GDP ribazoletransferase.